The primary structure comprises 684 residues: NAD(P)H-quinone oxidoreductase subunit 5, chloroplastic (684 aa).

14 helical membrane-spanning segments follow: residues 16–36 (WAFP…XLSI), 65–85 (IDPL…MVLI), 96–116 (GYLI…GLVT), 123–143 (IYIF…FWFT), 161–181 (GDFG…SFEF), 206–226 (AALL…HVWL), 234–254 (TPIS…FLVA), 256–276 (LLPL…IGII), 303–323 (LXYM…FHLI), 330–350 (ALLF…VGYS), 372–392 (TSFL…CFWS), 401–421 (WLYS…TAFY), 524–544 (LFPL…GIPF), and 583–603 (IFSV…YKPI).

Belongs to the complex I subunit 5 family. In terms of assembly, NDH is composed of at least 16 different subunits, 5 of which are encoded in the nucleus.

The protein localises to the plastid. Its subcellular location is the chloroplast thylakoid membrane. It catalyses the reaction a plastoquinone + NADH + (n+1) H(+)(in) = a plastoquinol + NAD(+) + n H(+)(out). The catalysed reaction is a plastoquinone + NADPH + (n+1) H(+)(in) = a plastoquinol + NADP(+) + n H(+)(out). In terms of biological role, NDH shuttles electrons from NAD(P)H:plastoquinone, via FMN and iron-sulfur (Fe-S) centers, to quinones in the photosynthetic chain and possibly in a chloroplast respiratory chain. The immediate electron acceptor for the enzyme in this species is believed to be plastoquinone. Couples the redox reaction to proton translocation, and thus conserves the redox energy in a proton gradient. This Sesamum indicum (Oriental sesame) protein is NAD(P)H-quinone oxidoreductase subunit 5, chloroplastic (ndhF).